The sequence spans 296 residues: F-box only protein 2 (296 aa).

A disordered region spans residues 1–41; sequence MDGDGDPESVGQPEEASPEEQPEEASAEEERPEDQQEEEAA. Acidic residues predominate over residues 16-40; it reads ASPEEQPEEASAEEERPEDQQEEEA. Positions 44–91 constitute an F-box domain; sequence AAYLDELPEPLLLRVLAALPAAELVQACRLVCLRWKELVDGAPLWLLK. Positions 113–296 constitute an FBA domain; sequence FYFLSKRRRN…VTNSSVWVEP (184 aa). A carbohydrate contacts are provided by residues 210-212 and 278-279; these read RSD and YW.

Component of the SCF(FBXO2) complex consisting of CUL1, RBX1, SKP1 and FBXO2. Predominantly detected as heterodimer with SKP1; the heterodimer with SKP1 is not part of the SCF(FBXO2) complex.

The protein localises to the cytoplasm. Its subcellular location is the microsome membrane. It functions in the pathway protein modification; protein ubiquitination. Its function is as follows. Substrate recognition component of a SCF (SKP1-CUL1-F-box protein) E3 ubiquitin-protein ligase complex that mediates the ubiquitination and subsequent proteasomal degradation of target proteins. Involved in the endoplasmic reticulum-associated degradation pathway (ERAD) for misfolded lumenal proteins by recognizing and binding sugar chains on unfolded glycoproteins that are retrotranslocated into the cytosol and promoting their ubiquitination and subsequent degradation. Prevents formation of cytosolic aggregates of unfolded glycoproteins that have been retrotranslocated into the cytosol. Able to recognize and bind denatured glycoproteins, preferentially those of the high-mannose type. The polypeptide is F-box only protein 2 (FBXO2) (Homo sapiens (Human)).